Reading from the N-terminus, the 118-residue chain is NADH-quinone oxidoreductase subunit A 2 (118 aa).

A run of 3 helical transmembrane segments spans residues 5–25 (YLPILVLVAIAVIFGLCSLVF), 60–80 (FYIIAMLFILFDIEAVFLYPW), and 87–107 (LGMFGVMEMGVFIVILFVGYI).

The protein belongs to the complex I subunit 3 family. In terms of assembly, NDH-1 is composed of 14 different subunits. Subunits NuoA, H, J, K, L, M, N constitute the membrane sector of the complex.

The protein resides in the cell inner membrane. It carries out the reaction a quinone + NADH + 5 H(+)(in) = a quinol + NAD(+) + 4 H(+)(out). NDH-1 shuttles electrons from NADH, via FMN and iron-sulfur (Fe-S) centers, to quinones in the respiratory chain. The immediate electron acceptor for the enzyme in this species is believed to be ubiquinone. Couples the redox reaction to proton translocation (for every two electrons transferred, four hydrogen ions are translocated across the cytoplasmic membrane), and thus conserves the redox energy in a proton gradient. The protein is NADH-quinone oxidoreductase subunit A 2 of Geobacter metallireducens (strain ATCC 53774 / DSM 7210 / GS-15).